Consider the following 692-residue polypeptide: UvrABC system protein B (692 aa).

The 156-residue stretch at 32–187 (ENIENGEKAQ…LLNDLVGIQF (156 aa)) folds into the Helicase ATP-binding domain. 45-52 (GATGTGKT) contributes to the ATP binding site. The Beta-hairpin motif lies at 98-121 (YYDYYQPEAYVPSSDTYIEKDSSV). The region spanning 436–631 (QIDDLVGEIH…TIKKEIRDLI (196 aa)) is the Helicase C-terminal domain. Residues 656–691 (KALVKKLEKEMQQAAAALDFEGAAQLRDMVLELRAM) enclose the UVR domain.

The protein belongs to the UvrB family. Forms a heterotetramer with UvrA during the search for lesions. Interacts with UvrC in an incision complex.

It localises to the cytoplasm. The UvrABC repair system catalyzes the recognition and processing of DNA lesions. A damage recognition complex composed of 2 UvrA and 2 UvrB subunits scans DNA for abnormalities. Upon binding of the UvrA(2)B(2) complex to a putative damaged site, the DNA wraps around one UvrB monomer. DNA wrap is dependent on ATP binding by UvrB and probably causes local melting of the DNA helix, facilitating insertion of UvrB beta-hairpin between the DNA strands. Then UvrB probes one DNA strand for the presence of a lesion. If a lesion is found the UvrA subunits dissociate and the UvrB-DNA preincision complex is formed. This complex is subsequently bound by UvrC and the second UvrB is released. If no lesion is found, the DNA wraps around the other UvrB subunit that will check the other stand for damage. In Lactococcus lactis subsp. cremoris (strain SK11), this protein is UvrABC system protein B.